Here is a 306-residue protein sequence, read N- to C-terminus: Ankyrin repeat domain-containing protein 23 (306 aa).

Residues 41–90 (QEAVAREKLKLEEEKRKKLERFNSSRLTLDNLTDLENLVQRRRKKRQRHK) are a coiled coil. The tract at residues 78–107 (LVQRRRKKRQRHKVPPREPESGAEPQPQVP) is disordered. A compositionally biased stretch (basic residues) spans 80 to 91 (QRRRKKRQRHKV). ANK repeat units lie at residues 144-173 (LHRT…AIEV), 177-206 (LDRT…QVNA), 210-239 (IWST…HINA), and 243-272 (EGDT…KLGV). The segment at 179–196 (RTPVFWACRGGHLDILKR) is interaction with TTN.

In terms of assembly, interacts with titin/TTN and MYPN.

The protein resides in the nucleus. May be involved in the energy metabolism. Could be a molecular link between myofibrillar stretch-induced signaling pathways and muscle gene expression. The sequence is that of Ankyrin repeat domain-containing protein 23 (Ankrd23) from Mus musculus (Mouse).